Consider the following 1444-residue polypeptide: MTDTSVLDQWKASFFVEDFLEKKTITRMVTQINCEFEEVVPSSNPDSQIEVEEVSLYTHMDYNEVFTPVSCLEKCSALQNQNQDLFIDDKGILFVSSRKHLPTLPTLLSRLKLFLVKDPLLDFKGQIFTEANFSRECFSLQETLEAFVKEDFCMDKVNFCQEKLEDTICLNEPSSFLIEYEFLIPPSLKPEIDIPSLSELKELLNPVPEIINYVDEKEKLFERDLTNKHGIEDIGDIKFSSTEILTIQSQSEPEECSKPGELEMPLTPLFLTCQHSSVNSLRTELQTFPLSPVCKINLLTAEESANEYYMMWQLERCRSPLNPFLLTVPRIQEPHSQYSVTDLKKIFSVKEESLVINLEKAEWWKQAGLNLKMMETLEHLNTYLCHDNLSSNDTKIEIFLPTKVLQLESCLEHKSHSSPIALIDEKSTNAHLSLPQKSPSLAKEVPDLCFSDDYFSDKGAAKEEKPKNDQEPVNRIIQKKENNDHFELDCTGPSIKSPSSSIIKKASFEHGKKQENDLDLLSDFIMLRNKYKTCTSKTEVTNSDEKHDKEACSLTLQEESPIVHINKTLEEINQERGTDSVIEIQASDSQCQAFCLLEAAASPILKNLVSLCTLPTANWKFATVIFDQTRFLLKEQEKVVSDAVRQGTIDEREMTFKHAALLHLLVTIRDVLLTCSLDTALGYLSKAKDIYNSILGPYLGDIWRQLEIVQFIRGKKPETNYKIQELQCQILSWMQSQQQIKVLIIIRMDSDGEKHFLIKILNKIEGLTLTVLHSNERKDFLESEGVLRGTSSCVVVHNQYIGADFPWSNFSFVVEYNYVEDSCWTKHCKELNIPYMAFKVILPDTVLERSTLLDRFGGFLLEIQIPYVFFASEGLLNTPDILQLLESNYNISLVERGCSESLKLFGSSECYVVVTIDEHTAIILQDLEELNYEKASDNIIMRLMALSLQYRYCWIILYTKETLNSEYLLTEKTLHHLALIYAALVSFGLNSEELDVKLIIAPGVEATALIIRQIADHSLMTSKRDPHEWLDKSWLKVSPSEEEMYLLDFPCINPLVAQLMLNKGPSLHWILLATLCQLQELLPEVPEKVLKHFCSITSLFKIGSSSITKSPQISSPQENRNQISTLSSQSSASDLDSVIQEHNEYYQYLGLGETVQEDKTTILNDNSSIMELKEISSFLPPVTSYNQTSYWKDSSCKSNIGQNTPFLINIESRRPAYNSFLNHSDSESDVFSLGLTQMNCETIKSPTDTQKRVSVVPRFINSQKRRTHEAKGFINKDVSDPIFSLEGTQSPLHWNFKKNIWEQENHPFNLQYGAQQTACNKLYSQKGNLFTDQQKCLSDESEGLTCESSKDETFWRELPSVPSLDLFRASDSNANQKEFNSLYFYQRAGKSLGQKRHHESSFNSGDKESLTGFMCSQLPQFKKRRLAYEKVPGRVDGQTRLRFF.

Low complexity predominate over residues 1106 to 1117 (SITKSPQISSPQ). Positions 1106–1129 (SITKSPQISSPQENRNQISTLSSQ) are disordered.

Belongs to the XPF family. Highly divergent. In terms of assembly, interacts with TEX11. Interacts with SPO16.

It is found in the chromosome. Functionally, ATPase required during meiosis for the formation of crossover recombination intermediates. Binds DNA: preferentially binds to single-stranded DNA and DNA branched structures. Does not show nuclease activity in vitro, but shows ATPase activity, which is stimulated by the presence of single-stranded DNA. Plays a key role in homologous recombination and crossing-over in meiotic prophase I in male and female germ cells. Required for proper synaptonemal complex assembly and homologous chromosome pairing. Requiref for recruitment TEX11 and MSH4 to recombination intermediates. This Homo sapiens (Human) protein is Protein shortage in chiasmata 1 ortholog.